A 286-amino-acid polypeptide reads, in one-letter code: Probable ketoamine kinase YniA (286 aa).

Position 91-93 (91-93 (DYL)) interacts with ATP. Residue Asp193 is the Proton acceptor of the active site.

This sequence belongs to the fructosamine kinase family.

Its function is as follows. Ketoamine kinase that phosphorylates ketoamines on the third carbon of the sugar moiety to generate ketoamine 3-phosphate. Its precise substrate are unknown: does not have ribulosamine and/or erythrulosamine 3-kinase activity in vitro. The polypeptide is Probable ketoamine kinase YniA (yniA) (Escherichia coli (strain K12)).